The following is a 325-amino-acid chain: Undecaprenyl-phosphate 4-deoxy-4-formamido-L-arabinose transferase (325 aa).

The next 2 helical transmembrane spans lie at 234-254 (LLSVIGSVIALMGFAFSLLLI) and 269-289 (VFMLFAVLFIFIGAQFVGMGL).

It belongs to the glycosyltransferase 2 family.

Its subcellular location is the cell inner membrane. The catalysed reaction is UDP-4-deoxy-4-formamido-beta-L-arabinose + di-trans,octa-cis-undecaprenyl phosphate = 4-deoxy-4-formamido-alpha-L-arabinopyranosyl di-trans,octa-cis-undecaprenyl phosphate + UDP. It functions in the pathway glycolipid biosynthesis; 4-amino-4-deoxy-alpha-L-arabinose undecaprenyl phosphate biosynthesis; 4-amino-4-deoxy-alpha-L-arabinose undecaprenyl phosphate from UDP-4-deoxy-4-formamido-beta-L-arabinose and undecaprenyl phosphate: step 1/2. It participates in bacterial outer membrane biogenesis; lipopolysaccharide biosynthesis. Its function is as follows. Catalyzes the transfer of 4-deoxy-4-formamido-L-arabinose from UDP to undecaprenyl phosphate. The modified arabinose is attached to lipid A and is required for resistance to polymyxin and cationic antimicrobial peptides. The polypeptide is Undecaprenyl-phosphate 4-deoxy-4-formamido-L-arabinose transferase (Erwinia tasmaniensis (strain DSM 17950 / CFBP 7177 / CIP 109463 / NCPPB 4357 / Et1/99)).